The sequence spans 252 residues: Triosephosphate isomerase (252 aa).

11-13 provides a ligand contact to substrate; sequence NWK. Residue His97 is the Electrophile of the active site. Residue Glu169 is the Proton acceptor of the active site. Residues Gly175, Ser215, and 236-237 contribute to the substrate site; that span reads GG.

This sequence belongs to the triosephosphate isomerase family. Homodimer.

It is found in the cytoplasm. It catalyses the reaction D-glyceraldehyde 3-phosphate = dihydroxyacetone phosphate. It functions in the pathway carbohydrate biosynthesis; gluconeogenesis. Its pathway is carbohydrate degradation; glycolysis; D-glyceraldehyde 3-phosphate from glycerone phosphate: step 1/1. Involved in the gluconeogenesis. Catalyzes stereospecifically the conversion of dihydroxyacetone phosphate (DHAP) to D-glyceraldehyde-3-phosphate (G3P). The protein is Triosephosphate isomerase of Mycoplasmoides gallisepticum (strain R(low / passage 15 / clone 2)) (Mycoplasma gallisepticum).